Consider the following 426-residue polypeptide: 3-isopropylmalate dehydratase large subunit (426 aa).

[4Fe-4S] cluster contacts are provided by Cys-307, Cys-367, and Cys-370.

This sequence belongs to the aconitase/IPM isomerase family. LeuC type 2 subfamily. Heterodimer of LeuC and LeuD. [4Fe-4S] cluster is required as a cofactor.

It catalyses the reaction (2R,3S)-3-isopropylmalate = (2S)-2-isopropylmalate. It functions in the pathway amino-acid biosynthesis; L-leucine biosynthesis; L-leucine from 3-methyl-2-oxobutanoate: step 2/4. Functionally, catalyzes the isomerization between 2-isopropylmalate and 3-isopropylmalate, via the formation of 2-isopropylmaleate. The chain is 3-isopropylmalate dehydratase large subunit from Sulfurovum sp. (strain NBC37-1).